Consider the following 393-residue polypeptide: F-box protein KIB4 (393 aa).

The F-box domain maps to 12 to 59 (AKQPILVLDLVRLVLERLSFVDFHRARCVSSVWYSASKSCIGGTNPTA).

Its subcellular location is the cytoplasm. The protein resides in the nucleus. It is found in the nucleolus. Functionally, component of SCF(ASK-cullin-F-box) E3 ubiquitin ligase complexes, which may mediate the ubiquitination and subsequent proteasomal degradation of target proteins. Required for brassinosteroid (BR) signal transduction. Mediates ASK7/BIN2/SK21 inactivation both by competing with substrate binding (e.g. BZR1) and by promoting its ubiquitination and subsequent proteasomal degradation. This chain is F-box protein KIB4, found in Arabidopsis thaliana (Mouse-ear cress).